The sequence spans 447 residues: Probable ribonuclease FAU-1 (447 aa).

The segment at 424–447 is disordered; sequence PEAPGGKICTPEGLTSAPPRSSSA.

Belongs to the FAU-1 family.

Its function is as follows. Probable RNase involved in rRNA stability through maturation and/or degradation of precursor rRNAs. Binds to RNA in loop regions with AU-rich sequences. This Pyrobaculum neutrophilum (strain DSM 2338 / JCM 9278 / NBRC 100436 / V24Sta) (Thermoproteus neutrophilus) protein is Probable ribonuclease FAU-1.